The following is a 197-amino-acid chain: ATP-dependent Clp protease proteolytic subunit (197 aa).

Residue serine 97 is the Nucleophile of the active site. The active site involves histidine 122.

The protein belongs to the peptidase S14 family. In terms of assembly, fourteen ClpP subunits assemble into 2 heptameric rings which stack back to back to give a disk-like structure with a central cavity, resembling the structure of eukaryotic proteasomes.

It localises to the cytoplasm. It catalyses the reaction Hydrolysis of proteins to small peptides in the presence of ATP and magnesium. alpha-casein is the usual test substrate. In the absence of ATP, only oligopeptides shorter than five residues are hydrolyzed (such as succinyl-Leu-Tyr-|-NHMec, and Leu-Tyr-Leu-|-Tyr-Trp, in which cleavage of the -Tyr-|-Leu- and -Tyr-|-Trp bonds also occurs).. Its function is as follows. Cleaves peptides in various proteins in a process that requires ATP hydrolysis. Has a chymotrypsin-like activity. Plays a major role in the degradation of misfolded proteins. The chain is ATP-dependent Clp protease proteolytic subunit from Trichlorobacter lovleyi (strain ATCC BAA-1151 / DSM 17278 / SZ) (Geobacter lovleyi).